We begin with the raw amino-acid sequence, 281 residues long: Pantothenate synthetase (281 aa).

An ATP-binding site is contributed by 30–37 (MGNLHQGH). The Proton donor role is filled by His37. Gln61 lines the (R)-pantoate pocket. Gln61 serves as a coordination point for beta-alanine. Residue 149–152 (GNKD) participates in ATP binding. Gln155 is a (R)-pantoate binding site. Residues Ile178 and 186-189 (MSSR) each bind ATP.

The protein belongs to the pantothenate synthetase family. As to quaternary structure, homodimer.

The protein localises to the cytoplasm. The catalysed reaction is (R)-pantoate + beta-alanine + ATP = (R)-pantothenate + AMP + diphosphate + H(+). It functions in the pathway cofactor biosynthesis; (R)-pantothenate biosynthesis; (R)-pantothenate from (R)-pantoate and beta-alanine: step 1/1. Its function is as follows. Catalyzes the condensation of pantoate with beta-alanine in an ATP-dependent reaction via a pantoyl-adenylate intermediate. This is Pantothenate synthetase from Shewanella sp. (strain ANA-3).